Here is a 399-residue protein sequence, read N- to C-terminus: Elongation factor Tu (399 aa).

A tr-type G domain is found at 10-209 (NPHVNIGTIG…EVDSYIPTPE (200 aa)). A G1 region spans residues 19 to 26 (GHVYHGKT). 19–26 (GHVYHGKT) is a GTP binding site. Threonine 26 contributes to the Mg(2+) binding site. The tract at residues 60–64 (GITIA) is G2. A G3 region spans residues 81 to 84 (DCPG). Residues 81 to 85 (DCPGH) and 136 to 139 (NKQD) each bind GTP. Positions 136-139 (NKQD) are G4. The segment at 174–176 (SAL) is G5.

This sequence belongs to the TRAFAC class translation factor GTPase superfamily. Classic translation factor GTPase family. EF-Tu/EF-1A subfamily. Monomer.

The protein localises to the cytoplasm. It catalyses the reaction GTP + H2O = GDP + phosphate + H(+). GTP hydrolase that promotes the GTP-dependent binding of aminoacyl-tRNA to the A-site of ribosomes during protein biosynthesis. The sequence is that of Elongation factor Tu from Helicobacter pylori (strain J99 / ATCC 700824) (Campylobacter pylori J99).